Reading from the N-terminus, the 492-residue chain is Transcript termination protein OPG145 (492 aa).

The 157-residue stretch at 100 to 256 (MIELKRPLYI…NSIINIAKLS (157 aa)) folds into the Helicase ATP-binding domain. 113 to 120 (LACGFGKT) provides a ligand contact to ATP. Positions 206–209 (DESH) match the DEAH box motif.

Belongs to the helicase family. Poxviruses subfamily. Interacts with OPG087. Might be part of a transcription complex composed at least of OPG087, OPG110, and OPG145.

It is found in the virion. In terms of biological role, DNA helicase which seems to act as a postreplicative transcription termination factor. Involved in ATP-dependent release of nascent RNA. Forms a stable complex with single-stranded DNA, and to a lesser extent RNA. The chain is Transcript termination protein OPG145 (OPG145) from Cynomys gunnisoni (Gunnison's prairie dog).